The chain runs to 472 residues: POU domain, class 5, transcription factor 1 (472 aa).

Disordered stretches follow at residues 127-154 (MPSE…YHLT) and 187-255 (ISQA…LTTE). Residues 220–234 (TAQNIPSAQAQSAPR) are compositionally biased toward polar residues. Positions 235 to 245 (SSGSSSGGCSN) are enriched in low complexity. Residues 246 to 255 (SEEEETLTTE) are compositionally biased toward acidic residues. One can recognise a POU-specific domain in the interval 249-323 (EETLTTEDLE…LLQRWLNEAE (75 aa)). A DNA-binding region (homeobox) is located at residues 343–402 (KRKRRTSLEGTVRSALESYFVKCPKPNTLEITHISDDLGLERDVVRVWFCNRRQKGKRLA).

The protein belongs to the POU transcription factor family. Class-7 subfamily.

It is found in the nucleus. Functionally, involved in early development of embryos, especially in the process of gastrulation. May play an important role in establishing and specifying rhombomeric segments. Seems to be required to maintain the cells in a highly undifferentiated state. In contrast to POU2, T-POU2 lacks DNA-binding activity because of its incomplete pou domain structure. Overexpression of POU2 does not have any effect on development, whereas overexpression of t-POU2 causes developmental retardation or arrest before gastrulation. The polypeptide is POU domain, class 5, transcription factor 1 (pou5f1) (Danio rerio (Zebrafish)).